The primary structure comprises 119 residues: Large ribosomal subunit protein bL20 (119 aa).

This sequence belongs to the bacterial ribosomal protein bL20 family.

Binds directly to 23S ribosomal RNA and is necessary for the in vitro assembly process of the 50S ribosomal subunit. It is not involved in the protein synthesizing functions of that subunit. The polypeptide is Large ribosomal subunit protein bL20 (Granulibacter bethesdensis (strain ATCC BAA-1260 / CGDNIH1)).